A 267-amino-acid polypeptide reads, in one-letter code: tRNA pseudouridine synthase A (267 aa).

The active-site Nucleophile is the Asp53. Tyr114 provides a ligand contact to substrate.

The protein belongs to the tRNA pseudouridine synthase TruA family. As to quaternary structure, homodimer.

The catalysed reaction is uridine(38/39/40) in tRNA = pseudouridine(38/39/40) in tRNA. Its function is as follows. Formation of pseudouridine at positions 38, 39 and 40 in the anticodon stem and loop of transfer RNAs. This is tRNA pseudouridine synthase A from Chlamydia trachomatis serovar L2b (strain UCH-1/proctitis).